Here is a 117-residue protein sequence, read N- to C-terminus: Large ribosomal subunit protein bL20c (117 aa).

The protein belongs to the bacterial ribosomal protein bL20 family.

The protein resides in the plastid. Its subcellular location is the chloroplast. Binds directly to 23S ribosomal RNA and is necessary for the in vitro assembly process of the 50S ribosomal subunit. It is not involved in the protein synthesizing functions of that subunit. The sequence is that of Large ribosomal subunit protein bL20c from Aethionema grandiflorum (Persian stone-cress).